We begin with the raw amino-acid sequence, 514 residues long: Tryptophan decarboxylase 1 (514 aa).

Serotonin is bound at residue Phe-104. Pyridoxal 5'-phosphate contacts are provided by Thr-175 and Ser-176. Residue His-214 coordinates serotonin. Thr-273 provides a ligand contact to pyridoxal 5'-phosphate. N6-(pyridoxal phosphate)lysine is present on Lys-330. Tyr-359 serves as the catalytic Proton donor. Residues Val-380 and Gly-381 each contribute to the pyridoxal 5'-phosphate site.

The protein belongs to the group II decarboxylase family. Forms homodimers. The cofactor is pyridoxal 5'-phosphate.

It catalyses the reaction L-tryptophan + H(+) = tryptamine + CO2. The catalysed reaction is 5-hydroxy-L-tryptophan + H(+) = serotonin + CO2. Functionally, involved in serotonin biosynthesis. Catalyzes the decarboxylation of L-tryptophan to produce tryptamine, which is converted to serotonin by tryptamine 5-hydroxylase. May play a major role in serotonin biosynthesis during senescence. Accumulation of serotonin attenuates leaf senescence. Catalyzes the decarboxylation of 5-hydroxy-L-tryptophan to produce serotonin. In Oryza sativa subsp. japonica (Rice), this protein is Tryptophan decarboxylase 1.